Here is a 632-residue protein sequence, read N- to C-terminus: X-ray repair cross-complementing protein 5 (632 aa).

The Schiff-base intermediate with DNA; for 5'-deoxyribose-5-phosphate lyase activity role is filled by R52. Residues L283–K490 enclose the Ku domain. The tract at residues D555–K578 is disordered. One can recognise an SAP domain in the interval L595–F629.

It belongs to the ku70 family. As to quaternary structure, heterodimer composed of XRCC5/Ku80 and XRCC6/Ku70. Component of the core long-range non-homologous end joining (NHEJ) complex (also named DNA-PK complex) composed of PRKDC, LIG4, XRCC4, XRCC6/Ku70, XRCC5/Ku86 and NHEJ1/XLF. Additional component of the NHEJ complex includes PAXX. Following autophosphorylation, PRKDC dissociates from DNA, leading to formation of the short-range NHEJ complex, composed of LIG4, XRCC4, XRCC6/Ku70, XRCC5/Ku86 and NHEJ1/XLF. Phosphorylated on serine residues.

It is found in the nucleus. The protein resides in the chromosome. Its function is as follows. Single-stranded DNA-dependent ATP-dependent helicase that plays a key role in DNA non-homologous end joining (NHEJ) by recruiting DNA-PK to DNA. Required for double-strand break repair and V(D)J recombination. Also has a role in chromosome translocation. Has a role in chromosome translocation. The DNA helicase II complex binds preferentially to fork-like ends of double-stranded DNA in a cell cycle-dependent manner. It works in the 3'-5' direction. During NHEJ, the XRCC5-XRRC6 dimer performs the recognition step: it recognizes and binds to the broken ends of the DNA and protects them from further resection. Binding to DNA may be mediated by XRCC6. The XRCC5-XRRC6 dimer acts as a regulatory subunit of the DNA-dependent protein kinase complex DNA-PK by increasing the affinity of the catalytic subunit PRKDC to DNA by 100-fold. The XRCC5-XRRC6 dimer is probably involved in stabilizing broken DNA ends and bringing them together. The assembly of the DNA-PK complex to DNA ends is required for the NHEJ ligation step. Probably also acts as a 5'-deoxyribose-5-phosphate lyase (5'-dRP lyase), by catalyzing the beta-elimination of the 5' deoxyribose-5-phosphate at an abasic site near double-strand breaks. 5'-dRP lyase activity allows to 'clean' the termini of abasic sites, a class of nucleotide damage commonly associated with strand breaks, before such broken ends can be joined. The XRCC5-XRRC6 dimer together with APEX1 acts as a negative regulator of transcription. This Gallus gallus (Chicken) protein is X-ray repair cross-complementing protein 5 (XRCC6).